The primary structure comprises 425 residues: Serine--tRNA ligase (425 aa).

228 to 230 (TAE) is a binding site for L-serine. 259 to 261 (RSE) contacts ATP. Glu-282 lines the L-serine pocket. Residue 346-349 (EIAS) participates in ATP binding. Ser-382 is an L-serine binding site.

Belongs to the class-II aminoacyl-tRNA synthetase family. Type-1 seryl-tRNA synthetase subfamily. Homodimer. The tRNA molecule binds across the dimer.

The protein resides in the cytoplasm. The enzyme catalyses tRNA(Ser) + L-serine + ATP = L-seryl-tRNA(Ser) + AMP + diphosphate + H(+). The catalysed reaction is tRNA(Sec) + L-serine + ATP = L-seryl-tRNA(Sec) + AMP + diphosphate + H(+). It functions in the pathway aminoacyl-tRNA biosynthesis; selenocysteinyl-tRNA(Sec) biosynthesis; L-seryl-tRNA(Sec) from L-serine and tRNA(Sec): step 1/1. Functionally, catalyzes the attachment of serine to tRNA(Ser). Is also able to aminoacylate tRNA(Sec) with serine, to form the misacylated tRNA L-seryl-tRNA(Sec), which will be further converted into selenocysteinyl-tRNA(Sec). In Rickettsia felis (strain ATCC VR-1525 / URRWXCal2) (Rickettsia azadi), this protein is Serine--tRNA ligase.